The sequence spans 120 residues: Large ribosomal subunit protein uL18 (120 aa).

Residues 1 to 23 are disordered; that stretch reads MKLSRKESVRRRHQRVRRKINGT. Positions 8 to 20 are enriched in basic residues; it reads SVRRRHQRVRRKI.

It belongs to the universal ribosomal protein uL18 family. Part of the 50S ribosomal subunit; part of the 5S rRNA/L5/L18/L25 subcomplex. Contacts the 5S and 23S rRNAs.

Functionally, this is one of the proteins that bind and probably mediate the attachment of the 5S RNA into the large ribosomal subunit, where it forms part of the central protuberance. This Microcystis aeruginosa (strain NIES-843 / IAM M-2473) protein is Large ribosomal subunit protein uL18.